The sequence spans 182 residues: MLDREGYRPNVGIILCNGRNEVFWGKRIREHSWQFPQGGIKRGETPEEAMFRELYEEVGLLPEHVRILGRTKGWLRYEVPTHWIKREWRGSYKGQKQIWFLLRLVGRDSDVNLRATNKPEFDAWRWNDYWVPLDAVIEFKRLVYEQALNELVRFLDFDRKGPRHKKEQEPFSDVVDSVRSEE.

A Nudix hydrolase domain is found at 6–149 (GYRPNVGIIL…KRLVYEQALN (144 aa)). The Nudix box signature appears at 38-59 (GGIKRGETPEEAMFRELYEEVG). Residues 162–182 (PRHKKEQEPFSDVVDSVRSEE) form a disordered region.

The protein belongs to the Nudix hydrolase family. RppH subfamily. A divalent metal cation is required as a cofactor.

Functionally, accelerates the degradation of transcripts by removing pyrophosphate from the 5'-end of triphosphorylated RNA, leading to a more labile monophosphorylated state that can stimulate subsequent ribonuclease cleavage. This Dechloromonas aromatica (strain RCB) protein is RNA pyrophosphohydrolase.